Here is a 368-residue protein sequence, read N- to C-terminus: Putative F-box/kelch-repeat protein At5g02995 (368 aa).

In terms of domain architecture, F-box spans 35 to 84 (SLYWNDPTEDCVWNCLARISRFHYPTLSLVSKGFRSLIASPELEATRSFI). 2 Kelch repeats span residues 140-186 (DIYI…IVDK) and 187-233 (KIYV…VSGG).

This Arabidopsis thaliana (Mouse-ear cress) protein is Putative F-box/kelch-repeat protein At5g02995.